The chain runs to 218 residues: uncharacterized protein (218 aa).

The ABC transporter domain maps to 2–216 (IEVLNLTKKI…ETSEKVIYKK (215 aa)). Residue 34–41 (GSNGSGKT) participates in ATP binding.

Belongs to the ABC transporter superfamily.

This is an uncharacterized protein from Bacillus subtilis (strain 168).